The chain runs to 81 residues: MAHSVKIYDTCIGCTQCVRACPTDVLEMIPWEGCKAKQIASAPRTEDCVGCKRCESACPTDFLSVRVYLWHETTRSMGLAY.

4Fe-4S ferredoxin-type domains follow at residues 2-31 and 39-68; these read AHSV…MIPW and IASA…VRVY. 8 residues coordinate [4Fe-4S] cluster: Cys-11, Cys-14, Cys-17, Cys-21, Cys-48, Cys-51, Cys-54, and Cys-58.

As to quaternary structure, the eukaryotic PSI reaction center is composed of at least 11 subunits. [4Fe-4S] cluster is required as a cofactor.

The protein resides in the plastid. It is found in the chloroplast thylakoid membrane. The catalysed reaction is reduced [plastocyanin] + hnu + oxidized [2Fe-2S]-[ferredoxin] = oxidized [plastocyanin] + reduced [2Fe-2S]-[ferredoxin]. In terms of biological role, apoprotein for the two 4Fe-4S centers FA and FB of photosystem I (PSI); essential for photochemical activity. FB is the terminal electron acceptor of PSI, donating electrons to ferredoxin. The C-terminus interacts with PsaA/B/D and helps assemble the protein into the PSI complex. Required for binding of PsaD and PsaE to PSI. PSI is a plastocyanin-ferredoxin oxidoreductase, converting photonic excitation into a charge separation, which transfers an electron from the donor P700 chlorophyll pair to the spectroscopically characterized acceptors A0, A1, FX, FA and FB in turn. In Cycas taitungensis (Prince sago), this protein is Photosystem I iron-sulfur center.